We begin with the raw amino-acid sequence, 120 residues long: Large ribosomal subunit protein uL18c (120 aa).

Belongs to the universal ribosomal protein uL18 family. As to quaternary structure, part of the 50S ribosomal subunit; contacts the 5S rRNA.

Its subcellular location is the plastid. The protein resides in the chloroplast. Its function is as follows. Binds 5S rRNA, forms part of the central protuberance of the 50S subunit. The chain is Large ribosomal subunit protein uL18c (rpl18) from Porphyra purpurea (Red seaweed).